Consider the following 419-residue polypeptide: CinA-like protein (419 aa).

The protein belongs to the CinA family.

The protein is CinA-like protein of Synechococcus sp. (strain CC9902).